The primary structure comprises 445 residues: Cryptochrome DASH (445 aa).

A Photolyase/cryptochrome alpha/beta domain is found at 4 to 137 (KIGLYWFTFD…VIVQHSVRSL (134 aa)).

The protein belongs to the DNA photolyase class-1 family. The cofactor is FAD. (6R)-5,10-methylene-5,6,7,8-tetrahydrofolate serves as cofactor.

May have a photoreceptor function. Binds DNA; probably functions as a transcriptional repressor. The chain is Cryptochrome DASH (cry) from Vibrio parahaemolyticus serotype O3:K6 (strain RIMD 2210633).